The following is a 481-amino-acid chain: Probable glycine dehydrogenase (decarboxylating) subunit 2 (481 aa).

The interval 1–23 (MVIFEKTRGKNSPSVMPSKKGDV) is disordered. Lys-263 bears the N6-(pyridoxal phosphate)lysine mark.

This sequence belongs to the GcvP family. C-terminal subunit subfamily. In terms of assembly, the glycine cleavage system is composed of four proteins: P, T, L and H. In this organism, the P 'protein' is a heterodimer of two subunits. Pyridoxal 5'-phosphate is required as a cofactor.

The catalysed reaction is N(6)-[(R)-lipoyl]-L-lysyl-[glycine-cleavage complex H protein] + glycine + H(+) = N(6)-[(R)-S(8)-aminomethyldihydrolipoyl]-L-lysyl-[glycine-cleavage complex H protein] + CO2. The glycine cleavage system catalyzes the degradation of glycine. The P protein binds the alpha-amino group of glycine through its pyridoxal phosphate cofactor; CO(2) is released and the remaining methylamine moiety is then transferred to the lipoamide cofactor of the H protein. This chain is Probable glycine dehydrogenase (decarboxylating) subunit 2, found in Francisella philomiragia subsp. philomiragia (strain ATCC 25017 / CCUG 19701 / FSC 153 / O#319-036).